Reading from the N-terminus, the 364-residue chain is Ribosomal RNA large subunit methyltransferase M (364 aa).

S-adenosyl-L-methionine-binding positions include Ser194, 227–230 (CPGG), Asp246, Asp266, and Asp284. The Proton acceptor role is filled by Lys313.

This sequence belongs to the class I-like SAM-binding methyltransferase superfamily. RNA methyltransferase RlmE family. RlmM subfamily. Monomer.

The protein resides in the cytoplasm. The catalysed reaction is cytidine(2498) in 23S rRNA + S-adenosyl-L-methionine = 2'-O-methylcytidine(2498) in 23S rRNA + S-adenosyl-L-homocysteine + H(+). In terms of biological role, catalyzes the 2'-O-methylation at nucleotide C2498 in 23S rRNA. The polypeptide is Ribosomal RNA large subunit methyltransferase M (Actinobacillus succinogenes (strain ATCC 55618 / DSM 22257 / CCUG 43843 / 130Z)).